The sequence spans 165 residues: 2-C-methyl-D-erythritol 2,4-cyclodiphosphate synthase (165 aa).

A divalent metal cation-binding residues include Asp12 and His14. 4-CDP-2-C-methyl-D-erythritol 2-phosphate-binding positions include 12–14 and 38–39; these read DVH and HS. A divalent metal cation is bound at residue His46. 4-CDP-2-C-methyl-D-erythritol 2-phosphate is bound by residues 60-62, 65-69, Phe143, and Arg146; these read DIG and FPDTD.

Belongs to the IspF family. In terms of assembly, homotrimer. A divalent metal cation is required as a cofactor.

It carries out the reaction 4-CDP-2-C-methyl-D-erythritol 2-phosphate = 2-C-methyl-D-erythritol 2,4-cyclic diphosphate + CMP. It participates in isoprenoid biosynthesis; isopentenyl diphosphate biosynthesis via DXP pathway; isopentenyl diphosphate from 1-deoxy-D-xylulose 5-phosphate: step 4/6. In terms of biological role, involved in the biosynthesis of isopentenyl diphosphate (IPP) and dimethylallyl diphosphate (DMAPP), two major building blocks of isoprenoid compounds. Catalyzes the conversion of 4-diphosphocytidyl-2-C-methyl-D-erythritol 2-phosphate (CDP-ME2P) to 2-C-methyl-D-erythritol 2,4-cyclodiphosphate (ME-CPP) with a corresponding release of cytidine 5-monophosphate (CMP). This is 2-C-methyl-D-erythritol 2,4-cyclodiphosphate synthase from Aromatoleum aromaticum (strain DSM 19018 / LMG 30748 / EbN1) (Azoarcus sp. (strain EbN1)).